The sequence spans 609 residues: UvrABC system protein C (609 aa).

The GIY-YIG domain occupies Ser-16 to Val-94. The UVR domain occupies Gln-203–Val-238.

This sequence belongs to the UvrC family. As to quaternary structure, interacts with UvrB in an incision complex.

The protein localises to the cytoplasm. In terms of biological role, the UvrABC repair system catalyzes the recognition and processing of DNA lesions. UvrC both incises the 5' and 3' sides of the lesion. The N-terminal half is responsible for the 3' incision and the C-terminal half is responsible for the 5' incision. In Shewanella baltica (strain OS185), this protein is UvrABC system protein C.